We begin with the raw amino-acid sequence, 197 residues long: Nucleoid occlusion factor SlmA (197 aa).

An HTH tetR-type domain is found at 7-67 (INRREHILQC…GLIDFIEESL (61 aa)). Residues 30-49 (TTAKLAAEVGVSEAALYRHF) constitute a DNA-binding region (H-T-H motif).

Belongs to the nucleoid occlusion factor SlmA family. In terms of assembly, homodimer. Interacts with FtsZ.

Its subcellular location is the cytoplasm. The protein resides in the nucleoid. Required for nucleoid occlusion (NO) phenomenon, which prevents Z-ring formation and cell division over the nucleoid. Acts as a DNA-associated cell division inhibitor that binds simultaneously chromosomal DNA and FtsZ, and disrupts the assembly of FtsZ polymers. SlmA-DNA-binding sequences (SBS) are dispersed on non-Ter regions of the chromosome, preventing FtsZ polymerization at these regions. The polypeptide is Nucleoid occlusion factor SlmA (Shewanella sediminis (strain HAW-EB3)).